Consider the following 83-residue polypeptide: Erabutoxin b (83 aa).

Positions 1-21 are cleaved as a signal peptide; it reads MKTLLLTLVVVTIVCLDLGYT. The segment at 24–38 is loop I; it reads CFNHQSSQPQTTKTC. Cystine bridges form between Cys-24–Cys-45, Cys-38–Cys-62, Cys-64–Cys-75, and Cys-76–Cys-81. The stretch between loop I and loop II stretch occupies residues 39 to 44; sequence SPGESS. Positions 45 to 62 are loop II; that stretch reads CYHKQWSDFRGTIIERGC. Residues 64-75 are loop III; sequence CPTVKPGIKLSC.

Belongs to the three-finger toxin family. Short-chain subfamily. Type I alpha-neurotoxin sub-subfamily. Expressed by the venom gland.

Its subcellular location is the secreted. Functionally, binds with high affinity to muscular nicotinic acetylcholine receptors (nAChRs) (tested on Torpedo marmorata, Kd=0.07 nM), and with low affinity to neuronal alpha-7/CHRNA7 nAChRs (tested on chimeric alpha-7/CHRNA7, Kd=22 uM) and inhibit acetylcholine from binding to the receptor, thereby impairing neuromuscular transmission. Produces peripheral paralysis by blocking neuromuscular transmission at the postsynaptic site. This is Erabutoxin b from Laticauda semifasciata (Black-banded sea krait).